The sequence spans 273 residues: 2,3,4,5-tetrahydropyridine-2,6-dicarboxylate N-succinyltransferase (273 aa).

Substrate is bound by residues Arg-104 and Asp-141.

It belongs to the transferase hexapeptide repeat family. As to quaternary structure, homotrimer.

It is found in the cytoplasm. The catalysed reaction is (S)-2,3,4,5-tetrahydrodipicolinate + succinyl-CoA + H2O = (S)-2-succinylamino-6-oxoheptanedioate + CoA. It functions in the pathway amino-acid biosynthesis; L-lysine biosynthesis via DAP pathway; LL-2,6-diaminopimelate from (S)-tetrahydrodipicolinate (succinylase route): step 1/3. This Nitrosospira multiformis (strain ATCC 25196 / NCIMB 11849 / C 71) protein is 2,3,4,5-tetrahydropyridine-2,6-dicarboxylate N-succinyltransferase.